The chain runs to 461 residues: mRNA cap guanine-N(7) methyltransferase (461 aa).

Residues 1–117 (MESSVKASVD…RKLQPQDALE (117 aa)) are disordered. Phosphoserine is present on residues S11, S15, S16, and S58. 2 stretches are compositionally biased toward polar residues: residues 14–29 (ESSPGVNETAAASGQR) and 49–58 (EQNSSYVQDS). Basic and acidic residues predominate over residues 65 to 93 (LDVEIILDEKHSEDDGGASKRSKLERGGG). Phosphoserine occurs at positions 94 and 99. The Nuclear localization signal signature appears at 107–109 (KRK). The mRNA cap 0 methyltransferase domain maps to 152 to 460 (SRIFYLRNFN…IYLVFAFEKQ (309 aa)). 161 to 162 (NN) contributes to the mRNA binding site. Residues K165, G190, D212, D246, Q269, and Y274 each contribute to the S-adenosyl-L-methionine site.

The protein belongs to the class I-like SAM-binding methyltransferase superfamily. mRNA cap 0 methyltransferase family. In terms of assembly, interacts with importin alpha, leading to stimulate both RNA-binding and methyltransferase activity. Interaction with importin alpha and beta is required for its nuclear localization, importin beta dissociating in response to RanGTP, allowing RNMT-importin alpha to bind RNA substrates. Interacts with elongating form of polymerase II and RNGTT. Interacts with RAMAC, this interaction significantly enhances RNA-binding and cap methyltransferase activity.

The protein localises to the nucleus. The catalysed reaction is a 5'-end (5'-triphosphoguanosine)-ribonucleoside in mRNA + S-adenosyl-L-methionine = a 5'-end (N(7)-methyl 5'-triphosphoguanosine)-ribonucleoside in mRNA + S-adenosyl-L-homocysteine. Methyltransferase activity is activated by RAMAC. Catalytic subunit of the mRNA-capping methyltransferase RNMT:RAMAC complex that methylates the N7 position of the added guanosine to the 5'-cap structure of mRNAs. Binds RNA containing 5'-terminal GpppC. The protein is mRNA cap guanine-N(7) methyltransferase (Rnmt) of Rattus norvegicus (Rat).